Reading from the N-terminus, the 301-residue chain is Aldose reductase (301 aa).

NADP(+) is bound at residue 11-20 (GKEIPTVGLG). The active-site Proton donor is the Tyr-51. Residue His-111 participates in substrate binding. 209-266 (SSLGSAPGSSAKVRDDKTIKAIAKKYGCAPSQIILSYITAQGICVIPKSRSKEHLREN) contributes to the NADP(+) binding site.

This sequence belongs to the aldo/keto reductase family.

The protein localises to the cytoplasm. It catalyses the reaction an alditol + NAD(+) = an aldose + NADH + H(+). It carries out the reaction an alditol + NADP(+) = an aldose + NADPH + H(+). Catalyzes the NADPH-dependent reduction of a wide variety of carbonyl-containing compounds to their corresponding alcohols with a broad range of catalytic efficiencies. The polypeptide is Aldose reductase (Encephalitozoon cuniculi (strain GB-M1) (Microsporidian parasite)).